A 697-amino-acid chain; its full sequence is Ion-translocating oxidoreductase complex subunit C (697 aa).

2 consecutive 4Fe-4S ferredoxin-type domains span residues 366 to 397 (AEMGLSEPEQSCIRCGLCVDACPAGLLPQQLY) and 407 to 436 (KARNHNLFDCIECGACAYVCPSNIPLVQYY). Cysteine 377, cysteine 380, cysteine 383, cysteine 387, cysteine 416, cysteine 419, cysteine 422, and cysteine 426 together coordinate [4Fe-4S] cluster. The disordered stretch occupies residues 576–674 (AQLESEPVKS…APEEDPRKAA (99 aa)). Residues 581-596 (EPVKSESEAPEEDPRK) are compositionally biased toward basic and acidic residues. A compositionally biased stretch (low complexity) spans 597 to 615 (AAVAAAIARVKAKKAAQAQ). Residues 619-634 (EPVKSESEAPEEDPRK) show a composition bias toward basic and acidic residues. Residues 635-653 (AAVAAAIARVKAKKAAQAQ) show a composition bias toward low complexity. Basic and acidic residues predominate over residues 657-672 (EPVKSESEAPEEDPRK).

Belongs to the 4Fe4S bacterial-type ferredoxin family. RnfC subfamily. As to quaternary structure, the complex is composed of six subunits: RnfA, RnfB, RnfC, RnfD, RnfE and RnfG. The cofactor is [4Fe-4S] cluster.

It localises to the cell inner membrane. Functionally, part of a membrane-bound complex that couples electron transfer with translocation of ions across the membrane. This Yersinia enterocolitica serotype O:8 / biotype 1B (strain NCTC 13174 / 8081) protein is Ion-translocating oxidoreductase complex subunit C.